The sequence spans 65 residues: Large ribosomal subunit protein uL30 (65 aa).

This sequence belongs to the universal ribosomal protein uL30 family. In terms of assembly, part of the 50S ribosomal subunit.

The chain is Large ribosomal subunit protein uL30 from Mycobacterium bovis (strain ATCC BAA-935 / AF2122/97).